The sequence spans 62 residues: UPF0434 protein Avi_4243 (62 aa).

It belongs to the UPF0434 family.

This Allorhizobium ampelinum (strain ATCC BAA-846 / DSM 112012 / S4) (Agrobacterium vitis (strain S4)) protein is UPF0434 protein Avi_4243.